We begin with the raw amino-acid sequence, 360 residues long: UDP-N-acetylglucosamine--N-acetylmuramyl-(pentapeptide) pyrophosphoryl-undecaprenol N-acetylglucosamine transferase (360 aa).

Positions 198 and 289 each coordinate UDP-N-acetyl-alpha-D-glucosamine.

The protein belongs to the glycosyltransferase 28 family. MurG subfamily.

It is found in the cell membrane. It carries out the reaction Mur2Ac(oyl-L-Ala-gamma-D-Glu-L-Lys-D-Ala-D-Ala)-di-trans,octa-cis-undecaprenyl diphosphate + UDP-N-acetyl-alpha-D-glucosamine = beta-D-GlcNAc-(1-&gt;4)-Mur2Ac(oyl-L-Ala-gamma-D-Glu-L-Lys-D-Ala-D-Ala)-di-trans,octa-cis-undecaprenyl diphosphate + UDP + H(+). It functions in the pathway cell wall biogenesis; peptidoglycan biosynthesis. In terms of biological role, cell wall formation. Catalyzes the transfer of a GlcNAc subunit on undecaprenyl-pyrophosphoryl-MurNAc-pentapeptide (lipid intermediate I) to form undecaprenyl-pyrophosphoryl-MurNAc-(pentapeptide)GlcNAc (lipid intermediate II). This chain is UDP-N-acetylglucosamine--N-acetylmuramyl-(pentapeptide) pyrophosphoryl-undecaprenol N-acetylglucosamine transferase, found in Streptococcus pyogenes serotype M18 (strain MGAS8232).